The following is a 143-amino-acid chain: MASGSRTTILPQSKEALLKSYNARLKDDVRSMLENFEEILKLARRESHSQISKTTQCEQDALEMQVRAANMVRAGESLMKLVADLKQYLILNDFHSVNEAITNNSQLFRNTQSECDKKLMKLRDEMAMDLYDLEEEYYTSIFK.

Belongs to the Mediator complex subunit 22 family. As to quaternary structure, component of the Mediator complex, which includes at least CDK8, MED4, MED6, MED11, MED14, MED17, MED18, MED20, MED21, MED22, MED27, MED28, MED30 and MED31.

It localises to the nucleus. Component of the Mediator complex, a coactivator involved in the regulated transcription of nearly all RNA polymerase II-dependent genes. Mediator functions as a bridge to convey information from gene-specific regulatory proteins to the basal RNA polymerase II transcription machinery. Mediator is recruited to promoters by direct interactions with regulatory proteins and serves as a scaffold for the assembly of a functional preinitiation complex with RNA polymerase II and the general transcription factors. This is Mediator of RNA polymerase II transcription subunit 22 (MED22) from Drosophila melanogaster (Fruit fly).